A 282-amino-acid polypeptide reads, in one-letter code: 4-hydroxy-3-methylbut-2-enyl diphosphate reductase (282 aa).

Residue Cys-12 coordinates [4Fe-4S] cluster. Residues His-40 and His-72 each contribute to the (2E)-4-hydroxy-3-methylbut-2-enyl diphosphate site. The dimethylallyl diphosphate site is built by His-40 and His-72. The isopentenyl diphosphate site is built by His-40 and His-72. Cys-94 provides a ligand contact to [4Fe-4S] cluster. His-122 lines the (2E)-4-hydroxy-3-methylbut-2-enyl diphosphate pocket. Residue His-122 participates in dimethylallyl diphosphate binding. His-122 serves as a coordination point for isopentenyl diphosphate. Glu-124 serves as the catalytic Proton donor. Thr-160 is a (2E)-4-hydroxy-3-methylbut-2-enyl diphosphate binding site. Residue Cys-188 coordinates [4Fe-4S] cluster. Ser-216, Asn-218, and Ser-260 together coordinate (2E)-4-hydroxy-3-methylbut-2-enyl diphosphate. Residues Ser-216, Asn-218, and Ser-260 each coordinate dimethylallyl diphosphate. Isopentenyl diphosphate contacts are provided by Ser-216, Asn-218, and Ser-260.

The protein belongs to the IspH family. The cofactor is [4Fe-4S] cluster.

The catalysed reaction is isopentenyl diphosphate + 2 oxidized [2Fe-2S]-[ferredoxin] + H2O = (2E)-4-hydroxy-3-methylbut-2-enyl diphosphate + 2 reduced [2Fe-2S]-[ferredoxin] + 2 H(+). It carries out the reaction dimethylallyl diphosphate + 2 oxidized [2Fe-2S]-[ferredoxin] + H2O = (2E)-4-hydroxy-3-methylbut-2-enyl diphosphate + 2 reduced [2Fe-2S]-[ferredoxin] + 2 H(+). Its pathway is isoprenoid biosynthesis; dimethylallyl diphosphate biosynthesis; dimethylallyl diphosphate from (2E)-4-hydroxy-3-methylbutenyl diphosphate: step 1/1. It participates in isoprenoid biosynthesis; isopentenyl diphosphate biosynthesis via DXP pathway; isopentenyl diphosphate from 1-deoxy-D-xylulose 5-phosphate: step 6/6. Catalyzes the conversion of 1-hydroxy-2-methyl-2-(E)-butenyl 4-diphosphate (HMBPP) into a mixture of isopentenyl diphosphate (IPP) and dimethylallyl diphosphate (DMAPP). Acts in the terminal step of the DOXP/MEP pathway for isoprenoid precursor biosynthesis. This is 4-hydroxy-3-methylbut-2-enyl diphosphate reductase from Geobacter metallireducens (strain ATCC 53774 / DSM 7210 / GS-15).